Here is a 61-residue protein sequence, read N- to C-terminus: Potassium channel toxin alpha-KTx 15.6 (61 aa).

The signal sequence occupies residues 1 to 23; it reads MKAFYGMLVIFILCSTCYISVDS. At Gln-24 the chain carries Pyrrolidone carboxylic acid. Disulfide bonds link Cys-31-Cys-52, Cys-37-Cys-57, and Cys-41-Cys-59.

It belongs to the short scorpion toxin superfamily. Potassium channel inhibitor family. Alpha-KTx 15 subfamily. Expressed by the venom gland.

The protein resides in the secreted. Functionally, irreversibly blocks the A-type voltage-gated potassium channels in rat cerebellum granular cells (190 nM induce 50% inhibitory effect) (IC(50)=190 nM). Also weakly inhibits Kv1.2/KCNA2 and Kv1.3/KCNA3. The chain is Potassium channel toxin alpha-KTx 15.6 from Tityus discrepans (Venezuelan scorpion).